Reading from the N-terminus, the 146-residue chain is Hydroxyproline-rich systemin (146 aa).

A signal peptide spans 1-24 (MISFFRAFFLIIIISFLIFVGAQA). Positions 25-48 (RTLLGNYHDDEMLIELKLESGNYG) are excised as a propeptide. The segment at 47 to 128 (YGRTPYKTPP…PPPPKPQDEQ (82 aa)) is disordered. 6 positions are modified to 4-hydroxyproline: P51, P55, P56, P57, P58, and P63. Residues P51, P55, P56, P57, P58, and P63 are each glycosylated (O-linked (Ara...) hydroxyproline). The propeptide occupies 67–70 (EIVN). A 4-hydroxyproline mark is found at P79, P80, and P82. Residues P79, P80, and P82 are each glycosylated (O-linked (Ara...) hydroxyproline). A propeptide spanning residues 86–110 (PIIGQLTTITTTPHHDDTVAAPPVG) is cleaved from the precursor. P119, P120, P121, and P122 each carry 4-hydroxyproline. 4 O-linked (Ara...) hydroxyproline glycosylation sites follow: P119, P120, P121, and P122. Residues 131 to 146 (IIITSSSSTLPLQASY) constitute a propeptide that is removed on maturation.

Post-translationally, O-glycosylated; contains pentose side chains. As to expression, leaves.

It is found in the secreted. Functionally, activates a lipid-based signal transduction pathway in which linolenic acid is converted to jasmonic acid, a potent activator of defense gene transcription. Induces synthesis of proteinase inhibitors I and II in leaves when supplied through cut stems. The sequence is that of Hydroxyproline-rich systemin from Solanum lycopersicum (Tomato).